The sequence spans 404 residues: Glucose-1-phosphate adenylyltransferase (404 aa).

Alpha-D-glucose 1-phosphate contacts are provided by residues Tyr99, Gly164, 179–180, and Ser197; that span reads EK.

Belongs to the bacterial/plant glucose-1-phosphate adenylyltransferase family.

The enzyme catalyses alpha-D-glucose 1-phosphate + ATP + H(+) = ADP-alpha-D-glucose + diphosphate. Its pathway is capsule biogenesis; capsule polysaccharide biosynthesis. It functions in the pathway glycan biosynthesis; glycogen biosynthesis. Functionally, involved in the biosynthesis of ADP-glucose, a building block, required in the biosynthesis of maltose-1-phosphate (M1P) and in the elongation reactions to produce linear alpha-1,4-glucans. Catalyzes the reaction between ATP and alpha-D-glucose 1-phosphate (G1P) to produce pyrophosphate and ADP-Glc. The chain is Glucose-1-phosphate adenylyltransferase from Mycobacteroides abscessus (strain ATCC 19977 / DSM 44196 / CCUG 20993 / CIP 104536 / JCM 13569 / NCTC 13031 / TMC 1543 / L948) (Mycobacterium abscessus).